A 91-amino-acid chain; its full sequence is Small ribosomal subunit protein uS19m (91 aa).

The protein belongs to the universal ribosomal protein uS19 family. As to quaternary structure, component of the mitochondrial small ribosomal subunit (mt-SSU). Mature yeast 74S mitochondrial ribosomes consist of a small (37S) and a large (54S) subunit. The 37S small subunit contains a 15S ribosomal RNA (15S mt-rRNA) and 34 different proteins. The 54S large subunit contains a 21S rRNA (21S mt-rRNA) and 46 different proteins.

The protein resides in the mitochondrion. Functionally, component of the mitochondrial ribosome (mitoribosome), a dedicated translation machinery responsible for the synthesis of mitochondrial genome-encoded proteins, including at least some of the essential transmembrane subunits of the mitochondrial respiratory chain. The mitoribosomes are attached to the mitochondrial inner membrane and translation products are cotranslationally integrated into the membrane. The sequence is that of Small ribosomal subunit protein uS19m (RSM19) from Saccharomyces cerevisiae (strain ATCC 204508 / S288c) (Baker's yeast).